The chain runs to 175 residues: Adenine phosphoribosyltransferase (175 aa).

This sequence belongs to the purine/pyrimidine phosphoribosyltransferase family. Homodimer.

It localises to the cytoplasm. The enzyme catalyses AMP + diphosphate = 5-phospho-alpha-D-ribose 1-diphosphate + adenine. The protein operates within purine metabolism; AMP biosynthesis via salvage pathway; AMP from adenine: step 1/1. Catalyzes a salvage reaction resulting in the formation of AMP, that is energically less costly than de novo synthesis. The protein is Adenine phosphoribosyltransferase of Synechococcus sp. (strain JA-2-3B'a(2-13)) (Cyanobacteria bacterium Yellowstone B-Prime).